Reading from the N-terminus, the 272-residue chain is Phosphoglycolate phosphatase (272 aa).

D19 acts as the Nucleophile in catalysis. Residues D19, D21, and D182 each coordinate Mg(2+).

Belongs to the HAD-like hydrolase superfamily. CbbY/CbbZ/Gph/YieH family. Mg(2+) is required as a cofactor.

It carries out the reaction 2-phosphoglycolate + H2O = glycolate + phosphate. Its pathway is organic acid metabolism; glycolate biosynthesis; glycolate from 2-phosphoglycolate: step 1/1. Functionally, specifically catalyzes the dephosphorylation of 2-phosphoglycolate. Is involved in the dissimilation of the intracellular 2-phosphoglycolate formed during the DNA repair of 3'-phosphoglycolate ends, a major class of DNA lesions induced by oxidative stress. The chain is Phosphoglycolate phosphatase from Pseudomonas syringae pv. tomato (strain ATCC BAA-871 / DC3000).